The primary structure comprises 281 residues: Undecaprenyl-diphosphatase (281 aa).

6 helical membrane passes run Trp90–Ile110, Val113–Ala133, Leu147–Val167, Ser191–Leu211, Ile217–Ile237, and Ile257–Gly277.

Belongs to the UppP family.

It localises to the cell membrane. It catalyses the reaction di-trans,octa-cis-undecaprenyl diphosphate + H2O = di-trans,octa-cis-undecaprenyl phosphate + phosphate + H(+). Catalyzes the dephosphorylation of undecaprenyl diphosphate (UPP). Confers resistance to bacitracin. In Kineococcus radiotolerans (strain ATCC BAA-149 / DSM 14245 / SRS30216), this protein is Undecaprenyl-diphosphatase.